We begin with the raw amino-acid sequence, 64 residues long: DNA-binding protein 7b (64 aa).

An N6-methyllysine mark is found at Lys5 and Lys7.

It belongs to the 7 kDa DNA-binding/endoribonuclease P2 family. As to quaternary structure, monomer. Post-translationally, lys-5 and Lys-7 may be methylated.

Its subcellular location is the cytoplasm. Functionally, can constrain negative DNA supercoils. May be involved in maintaining the integrity of the genome at high temperature. The sequence is that of DNA-binding protein 7b from Saccharolobus shibatae (strain ATCC 51178 / DSM 5389 / JCM 8931 / NBRC 15437 / B12) (Sulfolobus shibatae).